A 167-amino-acid chain; its full sequence is Calcium-binding protein CML19 (167 aa).

4 consecutive EF-hand domains span residues 23 to 58, 59 to 94, 96 to 131, and 132 to 167; these read QKRREIREIFDLFDIDGSGSIDASELNVAMRSLGFE, MNNQQINELMAEVDKNQSGAIDFDEFVHMMTTKFGE, DSIDELSKAFKIIDHDNNGKISPRDIKMIAKELGEN, and FTDNDIEEMIEEADRDKDGEVNLEEFMKMMKRTSYG. Aspartate 36, aspartate 38, serine 40, serine 42, glutamate 47, aspartate 72, asparagine 74, serine 76, glutamate 83, aspartate 109, aspartate 111, asparagine 113, lysine 115, aspartate 120, aspartate 145, aspartate 147, aspartate 149, glutamate 151, and glutamate 156 together coordinate Ca(2+).

Belongs to the centrin family. In terms of assembly, interacts with RAD4. Calcium is required for this interaction. Interacts with SAC3B. As to expression, expressed in leaves, roots, and at lower level in stems. Barely detectable in flower buds and flowers.

The protein localises to the cytoplasm. The protein resides in the nucleus. Functionally, potential calcium sensor that binds calcium in vitro. Modulates homologous recombination and nucleotide excision repair (NER). Involved in the early response to UV irradiation. The chain is Calcium-binding protein CML19 from Arabidopsis thaliana (Mouse-ear cress).